A 138-amino-acid chain; its full sequence is Calmodulin-beta (138 aa).

4 consecutive EF-hand domains span residues 1 to 32 (EFKEAFSLFDKDGDGTITTKELGTVMRSLGQN), 33 to 68 (PTEAELQDMINEVDADGNGTIDFPEFLTMMARKMKE), 70 to 105 (DSEEEIREAFRVFDKDGNGFISAAELRHVMTNLGEK), and 106 to 138 (LTDEEVDEMIREADIDGDGQVNYEEFVAMMTSK). Ca(2+) contacts are provided by Asp10, Asp12, Asp14, Thr16, Glu21, Asp46, Asp48, Asn50, Thr52, Glu57, Asp83, Asp85, Asn87, Glu94, Asp119, Asp121, Asp123, Gln125, and Glu130.

This sequence belongs to the calmodulin family.

In terms of biological role, calmodulin mediates the control of a large number of enzymes, ion channels and other proteins by Ca(2+). Among the enzymes to be stimulated by the calmodulin-Ca(2+) complex are a number of protein kinases and phosphatases. The polypeptide is Calmodulin-beta (Arbacia punctulata (Punctuate sea urchin)).